The following is a 381-amino-acid chain: 8-amino-7-oxononanoate synthase (381 aa).

Residue Arg-27 coordinates substrate. 105–106 (GY) contributes to the pyridoxal 5'-phosphate binding site. His-130 contacts substrate. Pyridoxal 5'-phosphate-binding positions include Ser-176, 201–204 (DEAH), and 232–235 (TLSK). At Lys-235 the chain carries N6-(pyridoxal phosphate)lysine. A substrate-binding site is contributed by Thr-345.

The protein belongs to the class-II pyridoxal-phosphate-dependent aminotransferase family. BioF subfamily. Homodimer. The cofactor is pyridoxal 5'-phosphate.

It catalyses the reaction 6-carboxyhexanoyl-[ACP] + L-alanine + H(+) = (8S)-8-amino-7-oxononanoate + holo-[ACP] + CO2. The protein operates within cofactor biosynthesis; biotin biosynthesis. Catalyzes the decarboxylative condensation of pimeloyl-[acyl-carrier protein] and L-alanine to produce 8-amino-7-oxononanoate (AON), [acyl-carrier protein], and carbon dioxide. The polypeptide is 8-amino-7-oxononanoate synthase (Mycobacterium avium (strain 104)).